A 178-amino-acid polypeptide reads, in one-letter code: Inorganic pyrophosphatase (178 aa).

The substrate site is built by K30, R44, and Y56. Mg(2+) is bound by residues D66, D71, and D103. Residue Y142 coordinates substrate.

It belongs to the PPase family. Homohexamer. Requires Mg(2+) as cofactor.

The protein resides in the cytoplasm. It catalyses the reaction diphosphate + H2O = 2 phosphate + H(+). Functionally, catalyzes the hydrolysis of inorganic pyrophosphate (PPi) forming two phosphate ions. The sequence is that of Inorganic pyrophosphatase from Xanthomonas campestris pv. campestris (strain ATCC 33913 / DSM 3586 / NCPPB 528 / LMG 568 / P 25).